A 318-amino-acid chain; its full sequence is Phospholipid scramblase 1 (318 aa).

Over residues 1–14 the composition is skewed to polar residues; sequence MDKQNSQMNASHPE. The segment at 1–64 is disordered; it reads MDKQNSQMNA…GPGPAGFPVP (64 aa). The tract at residues 1–84 is proline-rich domain (PRD); it reads MDKQNSQMNA…NQPVGAAGVP (84 aa). The Cytoplasmic portion of the chain corresponds to 1-288; sequence MDKQNSQMNA…IQFPLDLDVK (288 aa). The SH3-binding 1 signature appears at 18-26; that stretch reads PVGYPPQYP. 2 consecutive short sequence motifs (PPXY motif) follow at residues 22–25 and 33–36; these read PPQY and PPGY. Over residues 31-44 the composition is skewed to low complexity; sequence QGPPGYSGYPGPQV. An SH3-binding 2 motif is present at residues 42-50; sequence PQVSYPPPP. 2 positions are modified to phosphotyrosine; by ABL: Tyr69 and Tyr74. Residues 84-92 carry the SH3-binding 3 motif; the sequence is PWMPAPQPP. Positions 99–290 are interaction with hepatitis C virus E2 glycoprotein; sequence LEYLSQIDQI…FPLDLDVKMK (192 aa). A Phosphothreonine; by PKC/PRKCD modification is found at Thr161. Residues Cys184, Cys185, Cys186, Cys188, and Cys189 are each lipidated (S-palmitoyl cysteine). The Nuclear localization signal signature appears at 257–266; it reads GKISKHWTGI. A helical membrane pass occupies residues 289 to 305; it reads MKAVMIGACFLIDFMFF. At 306–318 the chain is on the extracellular side; that stretch reads ESTGSQEQKSGVW.

The protein belongs to the phospholipid scramblase family. As to quaternary structure, forms homooligomers in the presence of calcium. Interacts with ABL. Interacts with RELT, RELL1 and RELL2. Interacts with OXSR1 in the presence of RELT. Interacts with TOP2A and TOP2B. Interacts with OCLN. Interacts with TRPC5. Interacts with TRPC1 and TRPC4. Interacts with ILDR1. In terms of assembly, (Microbial infection) Interacts with hepatitis C virus E1 and E2 glycoproteins. (Microbial infection) Interacts with T-cell leukemia virus (HTLV)-1 protein Tax (via N-terminus); this interaction represses Tax homodimerization. As to quaternary structure, (Microbial infection) Interacts with HIV-1 protein Tat; this interaction represses the Tat-dependent transactivation of the HIV-1 long terminal repeat (LTR) and reduces the nuclear translocation of Tat. In terms of assembly, (Microbial infection) Interacts with hepatitis B virus protein HBx; this interaction promotes the proteasomal degradation of HBx. (Microbial infection) Interacts with human cytomegalovirus proteins IE1 and IE2. As to quaternary structure, (Microbial infection) Interacts with Epstein Barr virus (EBV) lytic switch protein BZLF1; this interaction negatively regulates the transcriptional regulatory activity of BZLF1 by preventing the formation of the BZLF1-CBP complex. In terms of assembly, (Microbial infection) Interacts with influenza virus nucleoprotein NP. The cofactor is Ca(2+). Requires Mg(2+) as cofactor. Zn(2+) serves as cofactor. Phosphorylation at Thr-161 by PKC/PKCD increases its phospholipid scramblase activity during both cell stimulation and apoptosis. Phosphorylated by OXSR1 in the presence of RELT. Post-translationally, palmitoylation is required for its phospholipid scramblase activity. Palmitoylation regulates its localization to the cell membrane or the nucleus; trafficking to the cell membrane is dependent upon palmitoylation whereas in the absence of palmitoylation, localizes to the nucleus. Expressed in platelets, erythrocyte membranes, lymphocytes, spleen, thymus, prostate, testis, uterus, intestine, colon, heart, placenta, lung, liver, kidney and pancreas. Not detected in brain and skeletal muscle.

It localises to the cell membrane. It is found in the nucleus. The protein localises to the cytoplasm. The protein resides in the perinuclear region. It carries out the reaction a 1,2-diacyl-sn-glycero-3-phosphocholine(in) = a 1,2-diacyl-sn-glycero-3-phosphocholine(out). It catalyses the reaction a 1,2-diacyl-sn-glycero-3-phosphoethanolamine(in) = a 1,2-diacyl-sn-glycero-3-phosphoethanolamine(out). The catalysed reaction is a 1,2-diacyl-sn-glycero-3-phospho-L-serine(in) = a 1,2-diacyl-sn-glycero-3-phospho-L-serine(out). Activated by Pb(2+) and Hg(2+) ions. Phosphorylation at Thr-161 by PKC/PKCD increases its phospholipid scramblase activity during both cell stimulation and apoptosis. Its function is as follows. Catalyzes calcium-induced ATP-independent rapid bidirectional and non-specific movement of phospholipids (lipid scrambling or lipid flip-flop) between the inner and outer leaflet of the plasma membrane resulting in collapse of the phospholipid asymmetry which leads to phosphatidylserine externalization on the cell surface. Mediates calcium-dependent phosphatidylserine externalization and apoptosis in neurons via its association with TRPC5. Also exhibits magnesium-dependent nuclease activity against double-stranded DNA and RNA but not single-stranded DNA and can enhance DNA decatenation mediated by TOP2A. Negatively regulates FcR-mediated phagocytosis in differentiated macrophages. May contribute to cytokine-regulated cell proliferation and differentiation. May play a role in the antiviral response of interferon (IFN) by amplifying and enhancing the IFN response through increased expression of select subset of potent antiviral genes. Inhibits the functions of viral transactivators, including human T-cell leukemia virus (HTLV)-1 protein Tax, human immunodeficiency virus (HIV)-1 Tat, human hepatitis B virus (HBV) HBx, Epstein-Barr virus (EBV) BZLF1 and human cytomegalovirus IE1 and IE2 proteins through direct interactions. Also mediates the inhibition of influenza virus infection by preventing nuclear import of the viral nucleoprotein/NP. Plays a crucial role as a defense factor against SARS-CoV-2 independently of its scramblase activity by directly targeting nascent viral vesicles to prevent virus-membrane fusion and the release of viral RNA into the host-cell cytosol. In terms of biological role, (Microbial infection) Acts as an attachment receptor for HCV. This chain is Phospholipid scramblase 1 (PLSCR1), found in Homo sapiens (Human).